The following is a 110-amino-acid chain: Large ribosomal subunit protein bL20 (110 aa).

This sequence belongs to the bacterial ribosomal protein bL20 family.

In terms of biological role, binds directly to 23S ribosomal RNA and is necessary for the in vitro assembly process of the 50S ribosomal subunit. It is not involved in the protein synthesizing functions of that subunit. This is Large ribosomal subunit protein bL20 from Shigella boydii serotype 4 (strain Sb227).